The chain runs to 648 residues: ATP-dependent DNA helicase Q1 (648 aa).

The region spanning 100–275 (INVTMARKDI…QKILCVGKCL (176 aa)) is the Helicase ATP-binding domain. Residue 113–120 (MPTGGGKS) participates in ATP binding. The DEVH box motif lies at 219–222 (DEVH). Positions 299-451 (DFTEDIVKLI…EMVSYCQNVS (153 aa)) constitute a Helicase C-terminal domain. Residues cysteine 453, cysteine 471, cysteine 475, and cysteine 478 each coordinate Zn(2+). 2 positions are modified to N6-acetyllysine: lysine 514 and lysine 522. The residue at position 597 (serine 597) is a Phosphoserine. A disordered region spans residues 601 to 648 (ALSEARQVEQVDSKGEEQSSGNSQKSKSRLQPSGSKNAGAKKRKLDDA). A compositionally biased stretch (basic and acidic residues) spans 606-617 (RQVEQVDSKGEE). Positions 618 to 636 (QSSGNSQKSKSRLQPSGSK) are enriched in polar residues. The residue at position 633 (serine 633) is a Phosphoserine. Over residues 639–648 (GAKKRKLDDA) the composition is skewed to basic residues.

This sequence belongs to the helicase family. RecQ subfamily. May form homodimers or higher order oligomers. Interacts with EXO1. Interacts with MLH1. Interacts with PARP1. Mg(2+) is required as a cofactor. The cofactor is Mn(2+). Requires Zn(2+) as cofactor. Expressed in all tissues examined. In terms of tissue distribution, only expressed in spermatocytes. Expression increases at pachytene (17 days old) and decreases after completion of meiosis II (7 weeks old).

It localises to the nucleus. The enzyme catalyses Couples ATP hydrolysis with the unwinding of duplex DNA by translocating in the 3'-5' direction.. The catalysed reaction is ATP + H2O = ADP + phosphate + H(+). It carries out the reaction dATP + H2O = dADP + phosphate + H(+). Functionally, DNA helicase that plays a role in DNA damage repair and genome stability. Exhibits a magnesium- and ATP-dependent DNA-helicase activity that unwinds single- and double-stranded DNA in a 3'-5' direction. Plays a role in restoring regressed replication forks. Required to restart stalled replication forks induced by abortive topoisomerase 1 and 2 lesions. May play a role in the repair of DNA that is damaged by ultraviolet light or other mutagens. The protein is ATP-dependent DNA helicase Q1 (Recql) of Mus musculus (Mouse).